A 91-amino-acid chain; its full sequence is Small ribosomal subunit protein uS17 (91 aa).

The protein belongs to the universal ribosomal protein uS17 family. In terms of assembly, part of the 30S ribosomal subunit.

One of the primary rRNA binding proteins, it binds specifically to the 5'-end of 16S ribosomal RNA. This chain is Small ribosomal subunit protein uS17, found in Psychrobacter cryohalolentis (strain ATCC BAA-1226 / DSM 17306 / VKM B-2378 / K5).